A 540-amino-acid polypeptide reads, in one-letter code: Calnexin homolog (540 aa).

Positions 1 to 29 (MELSRRKMCCYIQFCCFVLIGCFISQICA) are cleaved as a signal peptide. Over 30-469 (SSDAIFYESF…EKAETQPNIT (440 aa)) the chain is Lumenal. Ca(2+) contacts are provided by Ser38 and Asp69. An intrachain disulfide couples Cys112 to Cys147. 4 residues coordinate an alpha-D-glucoside: Tyr116, Lys118, Tyr138, and Asp145. The disordered stretch occupies residues 221 to 301 (LIPTKTIPDP…DWDDEEDGEW (81 aa)). Residues 227–360 (IPDPDDKKPE…REIPNPDYFE (134 aa)) are p domain (Extended arm). Residues 228–253 (PDPDDKKPEDWDERAKIPDPEATKPD) show a composition bias toward basic and acidic residues. 5 consecutive repeat copies span residues 229-240 (DPDDKKPEDWDE), 246-257 (DPEATKPDDWDE), 265-276 (DEEAEKPEGWLD), 284-295 (DPEAVKPEDWDD), and 299-309 (GEWEAPQIENP). 4 X approximate repeats regions lie at residues 229–295 (DPDD…DWDD) and 299–356 (GEWE…IPNP). Acidic residues-rich tracts occupy residues 254-285 (DWDE…IDDP) and 292-301 (DWDDEEDGEW). Cysteines 311 and 317 form a disulfide. 3 repeat units span residues 318-328 (GEWRRPLKRNP), 332-342 (GKWHAPLIDNP), and 346-356 (GIWKPREIPNP). Glu375 is an an alpha-D-glucoside binding site. Position 386 (Asp386) interacts with Ca(2+). Asn467 is a glycosylation site (N-linked (GlcNAc...) asparagine). The helical transmembrane segment at 470-490 (IGVIVSIIVVIFSILLKLLFG) threads the bilayer. Residues 491–540 (GKKAAPKVNVVPKKKEEPEASNTAEVREGEEEKTEGEVAAAPRRRPRRDT) lie on the Cytoplasmic side of the membrane. Positions 499-540 (NVVPKKKEEPEASNTAEVREGEEEKTEGEVAAAPRRRPRRDT) are disordered.

Belongs to the calreticulin family.

It is found in the endoplasmic reticulum membrane. Calcium-binding protein that interacts with newly synthesized monoglucosylated glycoproteins in the endoplasmic reticulum. It may act in assisting protein assembly and/or in the retention within the ER of unassembled protein subunits. It seems to play a major role in the quality control apparatus of the ER by the retention of incorrectly folded proteins. In Helianthus tuberosus (Jerusalem artichoke), this protein is Calnexin homolog.